Consider the following 77-residue polypeptide: Acyl carrier protein (77 aa).

The Carrier domain maps to 1 to 76; it reads MATFDDVKAV…DVVNYIDNLK (76 aa). The residue at position 36 (Ser36) is an O-(pantetheine 4'-phosphoryl)serine.

Belongs to the acyl carrier protein (ACP) family. In terms of processing, 4'-phosphopantetheine is transferred from CoA to a specific serine of apo-ACP by AcpS. This modification is essential for activity because fatty acids are bound in thioester linkage to the sulfhydryl of the prosthetic group.

It is found in the cytoplasm. It participates in lipid metabolism; fatty acid biosynthesis. Functionally, carrier of the growing fatty acid chain in fatty acid biosynthesis. This chain is Acyl carrier protein, found in Campylobacter jejuni (strain RM1221).